Reading from the N-terminus, the 180-residue chain is ATP-dependent protease subunit HslV (180 aa).

Thr6 is a catalytic residue. Positions 164, 167, and 170 each coordinate Na(+).

It belongs to the peptidase T1B family. HslV subfamily. In terms of assembly, a double ring-shaped homohexamer of HslV is capped on each side by a ring-shaped HslU homohexamer. The assembly of the HslU/HslV complex is dependent on binding of ATP.

The protein resides in the cytoplasm. The catalysed reaction is ATP-dependent cleavage of peptide bonds with broad specificity.. With respect to regulation, allosterically activated by HslU binding. Functionally, protease subunit of a proteasome-like degradation complex believed to be a general protein degrading machinery. The protein is ATP-dependent protease subunit HslV of Borrelia recurrentis (strain A1).